Here is a 434-residue protein sequence, read N- to C-terminus: MKKWKSSLLGIAIWSLAASSMAAPKELDKVVTLVNDSVILQSDVNAMLQTVRINAAEQNQPLPDDALLTEQVMEKLIIETLQLQQAEQFGIRIDDTRLDQAVAEIAKERELTIPQLQKELEKSGISYSIFREQMRRDMTASEARTIQVRRRINILPQEVEMLAEQLNKQTLQTVQFNISHIQLRVEEGATKEQREETQQQAQQIVDELKNGADFANLAYSYSKGPKALQGGEWGWMRQEEMPTIFADQIKSNGKGAIIGPFRSGVGYHIIKVNDVKGLETVSVTEVNARHILIKTSVILSDDGAKRQLEKARQDILAGRQTFADEAQKLSSDPGSAANGGELGWQTPDLYVPEFKDKIETLPKGTISEPFKTVHGWHIVEVLDRRNVDRTDAAMKNRAYRILFSRKFNEEAQAWLQELRAGAYIEQLGTNDDQG.

Residues 1–22 form the signal peptide; it reads MKKWKSSLLGIAIWSLAASSMA. 2 consecutive PpiC domains span residues 173-274 and 283-383; these read TVQF…KVND and VTEV…EVLD.

The protein resides in the periplasm. It catalyses the reaction [protein]-peptidylproline (omega=180) = [protein]-peptidylproline (omega=0). In terms of biological role, chaperone involved in the correct folding and assembly of outer membrane proteins. Recognizes specific patterns of aromatic residues and the orientation of their side chains, which are found more frequently in integral outer membrane proteins. May act in both early periplasmic and late outer membrane-associated steps of protein maturation. The chain is Chaperone SurA from Photobacterium profundum (strain SS9).